We begin with the raw amino-acid sequence, 1311 residues long: Kinase and exchange factor for Rac A (1311 aa).

The Protein kinase domain occupies 18 to 316 (LVFKDIIGKG…STIVTILESI (299 aa)). ATP-binding positions include 24 to 32 (IGKGNFGCV) and Lys-45. Asp-138 (proton acceptor) is an active-site residue. 3 disordered regions span residues 169–201 (NGSD…KNNG), 360–426 (QQQS…TTTT), and 446–471 (PLSK…LIGS). Positions 451–471 (QQQQQRNQNSSIIDNNSLIGS) are enriched in low complexity. The region spanning 650-679 (ELNLIIKLQSRIRGWLVRRRYKIFLSNWKL) is the IQ domain. One can recognise a DH domain in the interval 691–927 (QWIRLFNQLI…RETSNYIQSQ (237 aa)). Composition is skewed to low complexity over residues 994 to 1021 (SKYN…TNSN) and 1031 to 1044 (STSN…GNNN). Disordered stretches follow at residues 994–1044 (SKYN…GNNN), 1114–1145 (NNPN…NGSI), and 1208–1311 (GTST…FSKD). The span at 1117–1137 (NGGGSNNNSIGGGGGGRGGSG) shows a compositional bias: gly residues. A compositionally biased stretch (polar residues) spans 1208-1229 (GTSTPERKTSLVNMSPSTTSSL). Low complexity predominate over residues 1230–1245 (NNIDSNYNNNNNNVTN). The segment covering 1246–1257 (TPIKSVTSSPSI) has biased composition (polar residues). Residues 1263–1276 (NDNNQQPQLPSQPN) are compositionally biased toward low complexity. A compositionally biased stretch (polar residues) spans 1277–1287 (EEFQFTVPTTP). Positions 1290 to 1303 (KKKKRGSFSSKLKR) are enriched in basic residues.

This sequence belongs to the protein kinase superfamily. TKL Ser/Thr protein kinase family. Mg(2+) serves as cofactor.

It carries out the reaction L-seryl-[protein] + ATP = O-phospho-L-seryl-[protein] + ADP + H(+). The enzyme catalyses L-threonyl-[protein] + ATP = O-phospho-L-threonyl-[protein] + ADP + H(+). The protein is Kinase and exchange factor for Rac A (kxcA) of Dictyostelium discoideum (Social amoeba).